The sequence spans 423 residues: tRNA(Ile)-lysidine synthase (423 aa).

29–34 lines the ATP pocket; sequence SGGKDS.

The protein belongs to the tRNA(Ile)-lysidine synthase family.

It localises to the cytoplasm. It carries out the reaction cytidine(34) in tRNA(Ile2) + L-lysine + ATP = lysidine(34) in tRNA(Ile2) + AMP + diphosphate + H(+). In terms of biological role, ligates lysine onto the cytidine present at position 34 of the AUA codon-specific tRNA(Ile) that contains the anticodon CAU, in an ATP-dependent manner. Cytidine is converted to lysidine, thus changing the amino acid specificity of the tRNA from methionine to isoleucine. This is tRNA(Ile)-lysidine synthase from Lactococcus lactis subsp. lactis (strain IL1403) (Streptococcus lactis).